Here is a 686-residue protein sequence, read N- to C-terminus: Translation initiation factor IF-2 (686 aa).

Residues Met-35–Arg-99 are disordered. Residues Leu-50–Lys-68 are compositionally biased toward basic and acidic residues. The span at Asp-69–Met-79 shows a compositional bias: basic residues. Residues Glu-87 to Arg-99 show a composition bias toward basic and acidic residues. A tr-type G domain is found at Leu-186–Lys-355. The tract at residues Gly-195 to Thr-202 is G1. Gly-195–Thr-202 provides a ligand contact to GTP. Residues Gly-220–His-224 form a G2 region. Positions Asp-241–Gly-244 are G3. GTP contacts are provided by residues Asp-241–His-245 and Asn-295–Asp-298. A G4 region spans residues Asn-295–Asp-298. Residues Ser-331–Leu-333 are G5.

It belongs to the TRAFAC class translation factor GTPase superfamily. Classic translation factor GTPase family. IF-2 subfamily.

The protein localises to the cytoplasm. Its function is as follows. One of the essential components for the initiation of protein synthesis. Protects formylmethionyl-tRNA from spontaneous hydrolysis and promotes its binding to the 30S ribosomal subunits. Also involved in the hydrolysis of GTP during the formation of the 70S ribosomal complex. The polypeptide is Translation initiation factor IF-2 (Halothermothrix orenii (strain H 168 / OCM 544 / DSM 9562)).